Here is a 163-residue protein sequence, read N- to C-terminus: Ribonuclease P protein component (163 aa).

Positions 1 to 68 are disordered; it reads MDEKDVATQP…GGKLLSLKGD (68 aa). The span at 8–19 shows a compositional bias: polar residues; that stretch reads TQPQETGQNPRL.

It belongs to the RnpA family. Consists of a catalytic RNA component (M1 or rnpB) and a protein subunit.

The catalysed reaction is Endonucleolytic cleavage of RNA, removing 5'-extranucleotides from tRNA precursor.. Functionally, RNaseP catalyzes the removal of the 5'-leader sequence from pre-tRNA to produce the mature 5'-terminus. It can also cleave other RNA substrates such as 4.5S RNA. The protein component plays an auxiliary but essential role in vivo by binding to the 5'-leader sequence and broadening the substrate specificity of the ribozyme. The chain is Ribonuclease P protein component from Thermus thermophilus (strain ATCC BAA-163 / DSM 7039 / HB27).